We begin with the raw amino-acid sequence, 418 residues long: Sprouty-related, EVH1 domain-containing protein 2 (418 aa).

Residues 5 to 122 form the WH1 domain; sequence THPDDDSYIV…RGVRKAIEDL (118 aa). The tract at residues 127–171 is disordered; that stretch reads TTSSSTIHNEAELGDDDVFTTATDSSSNSSQKREQPTRTISSPTS. Over residues 146–156 the composition is skewed to polar residues; sequence TTATDSSSNSS. The 57-residue stretch at 201 to 257 folds into the KBD domain; the sequence is PYRQVSFPDDDEEIVRINPREKIWMTGYEDYRHAPVRGKYPDPSEDADSSYVRFAKG. A Phosphoserine modification is found at serine 206. 2 positions are modified to phosphotyrosine: tyrosine 228 and tyrosine 231. Residues 275 to 302 are disordered; the sequence is GLGEDPKGRGGSVIKTQPSRGKSRRRKE. The SPR domain occupies 308 to 416; it reads RCVYCRDMFN…CRCCGGKHKA (109 aa).

Homodimer and heterodimer. Able to interact with SPRED1 to form heterodimers. Interacts with RAS. May interact with ZDHHC13 (via ANK repeats) and ZDHHC17 (via ANK repeats). Interacts with TESK1. Interacts with NF1. Post-translationally, phosphorylated on serine and threonine residues. Phosphorylated on tyrosine. Phosphorylation of Tyr-228 and Tyr-231 are required for ubiquitination. In terms of processing, ubiquitinated; leading to degradation by the proteasome. As to expression, expressed in liver, skin, small intestine, salivary gland and prostate.

The protein localises to the cell membrane. The protein resides in the cytoplasmic vesicle. It is found in the secretory vesicle membrane. Its subcellular location is the cytoplasm. Functionally, negatively regulates Ras signaling pathways and downstream activation of MAP kinases. Recruits and translocates NF1 to the cell membrane, thereby enabling NF1-dependent hydrolysis of active GTP-bound Ras to inactive GDP-bound Ras. Inhibits fibroblast growth factor (FGF)-induced retinal lens fiber differentiation, probably by inhibiting FGF-mediated phosphorylation of ERK1/2. Inhibits TGFB-induced epithelial-to-mesenchymal transition in lens epithelial cells. The polypeptide is Sprouty-related, EVH1 domain-containing protein 2 (SPRED2) (Homo sapiens (Human)).